A 103-amino-acid chain; its full sequence is MDPRLTHEDRILHLAPLTEKGWLLVEGRDAIHKEFKFKDFNAAFGFMTRVALLAEKMDHHPEWFNVYNKVQITLSSHDVAGLSQRDIKLASFIEKAAVGASTS.

It belongs to the pterin-4-alpha-carbinolamine dehydratase family.

The enzyme catalyses (4aS,6R)-4a-hydroxy-L-erythro-5,6,7,8-tetrahydrobiopterin = (6R)-L-erythro-6,7-dihydrobiopterin + H2O. Its function is as follows. Involved in tetrahydrobiopterin biosynthesis. The polypeptide is Probable pterin-4-alpha-carbinolamine dehydratase (Pcd) (Hypsibius exemplaris (Freshwater tardigrade)).